The primary structure comprises 277 residues: Diaminopimelate epimerase (277 aa).

Asparagine 17, glutamine 50, and asparagine 68 together coordinate substrate. Cysteine 77 functions as the Proton donor in the catalytic mechanism. Residues 78–79 (GN), asparagine 162, asparagine 195, and 213–214 (ER) each bind substrate. The Proton acceptor role is filled by cysteine 222. 223-224 (GT) is a substrate binding site.

Belongs to the diaminopimelate epimerase family. As to quaternary structure, homodimer.

It is found in the cytoplasm. The catalysed reaction is (2S,6S)-2,6-diaminopimelate = meso-2,6-diaminopimelate. It participates in amino-acid biosynthesis; L-lysine biosynthesis via DAP pathway; DL-2,6-diaminopimelate from LL-2,6-diaminopimelate: step 1/1. In terms of biological role, catalyzes the stereoinversion of LL-2,6-diaminopimelate (L,L-DAP) to meso-diaminopimelate (meso-DAP), a precursor of L-lysine and an essential component of the bacterial peptidoglycan. The sequence is that of Diaminopimelate epimerase from Phenylobacterium zucineum (strain HLK1).